Here is a 647-residue protein sequence, read N- to C-terminus: MGPLSARLLMQRGRPKSDRLGKIRSLDLSGLELLSEHLDPKLLCRLTQLQELDLSNNHLETLPDNLGLSHLRVLRCANNQLGDVTALCQFPKLEELSLEGNPFLTVNDNLKVSFLLPTLRKVNGKDASSTYSQVENLNRELTSRVTAHWEKFMATLGPEEEAEKAQADFVKSAVRDVRYGPESLSEFTQWRVRMISEELVAASRTQVQKANSPEKPPEAGAAHKPRARLAALKRPDDVPLSLSPSKRACASPSAQVEGSPVAGSDGSQPAVKLEPLHFLQCHSKNNSPQDLETQLWACAFEPAWEEGATSQTVATCGGEAVCVIDCQTGIVLHKYKAPGEEFFSVAWTALMVVTQAGHKKRWSVLAAAGLRGLVRLLHVRAGFCCGVIRAHKKAIATLCFSPAHETHLFTASYDKRIILWDIGVPNQDYEFQASQLLTLDTTSIPLRLCPVASCPDARLLAGCEGGCCCWDVRLDQPQKRRVCEVEFVFSEGSEASGRRVDGLAFVNEDIVASKGSGLGTICLWSWRQTWGGRGSQSTVAVVVLARLQWSSTELAYFSLSACPDKGIVLCGDEEGNVWLYDVSNILKQPPLLPAALQAPTQILKWPQPWALGQVVTKTMVNTVVANASFTYLTALTDSNIVAIWGRM.

LRR repeat units follow at residues 22–43 (KIRSLDLSGLELLSEHLDPKLL), 48–69 (QLQELDLSNNHLETLPDNLGLS), 70–91 (HLRVLRCANNQLGDVTALCQFP), and 92–113 (KLEELSLEGNPFLTVNDNLKVS). Positions 204 to 267 (RTQVQKANSP…GSPVAGSDGS (64 aa)) are disordered. Phosphoserine is present on residues Ser212, Ser243, Ser251, Ser259, and Ser264. 7 WD repeats span residues 282-335 (HSKN…LHKY), 341-379 (EFFSVAWTALMVVTQAGHKKRWSVLAAAGLRGLVRLLHV), 383-422 (FCCGVIRAHKKAIATLCFSPAHETHLFTASYDKRIILWDI), 426-472 (NQDY…CWDV), 484-526 (EVEF…LWSW), 542-582 (VVLA…LYDV), and 598-646 (APTQ…IWGR).

Belongs to the LRWD1 family. In terms of assembly, integral component of the ORC complex. Directly interacts with CDT1, GMNN and ORC2. Interacts with ORC2 only when non-ubiquitinated; this interaction prevents LRWD1 ubiquitination and degradation. Some of these interactions are regulated in a cell-cycle dependent manner. Interaction with ORC1 occurs predominantly during G1. Association with phosphorylated ORC1 during mitosis is not efficient. Interaction with CDT1 occurs during G1 phase, as well as during mitosis with phosphorylated CDT1. Interaction with GMNN occurs from G1/S to mitosis. Interaction with ORC2 is observed throughout the cell cycle. The stoichiometry of the ORCA/ORC/CDT1/GMNN complex is 1:1:1:2. Interacts with CUL4A and DDB1; this interaction may lead to ubiquitination. In terms of processing, ubiquitinated; undergoes 'Lys-48'-linked polyubiquitination leading to proteasomal degradation. Ubiquitination occurs within the WD repeats at the end of the G1 phase. Ubiquitination may be catalyzed by the CUL4-DDB1 E3 ubiquitin-protein ligase complex and other E3 ligases. Testis-specific. Drastically down-regulated in testis from patients with Sertoli cell-only syndrome (SCOS).

Its subcellular location is the nucleus. The protein resides in the chromosome. It localises to the centromere. The protein localises to the telomere. It is found in the cytoplasm. Its subcellular location is the cytoskeleton. The protein resides in the microtubule organizing center. It localises to the centrosome. The protein localises to the kinetochore. In terms of biological role, required for G1/S transition. Recruits and stabilizes the origin recognition complex (ORC) onto chromatin during G1 to establish pre-replication complex (preRC) and to heterochromatic sites in post-replicated cells. Binds a combination of DNA and histone methylation repressive marks on heterochromatin. Binds histone H3 and H4 trimethylation marks H3K9me3, H3K27me3 and H4K20me3 in a cooperative manner with DNA methylation. Required for silencing of major satellite repeats. May be important ORC2, ORC3 and ORC4 stability. This chain is Leucine-rich repeat and WD repeat-containing protein 1 (LRWD1), found in Homo sapiens (Human).